The primary structure comprises 395 residues: Carbohydrate sulfotransferase 5 (395 aa).

Residues 1–7 (MRLPRFS) lie on the Cytoplasmic side of the membrane. Residues 8–26 (STVMLSLLMVQTGILVFLV) traverse the membrane as a helical; Signal-anchor for type II membrane protein segment. Topologically, residues 27–395 (SRQVPSSPAG…ASSTEKQPES (369 aa)) are lumenal. 49–55 (WRSGSSF) contributes to the 3'-phosphoadenylyl sulfate binding site. N-linked (GlcNAc...) asparagine glycosylation is found at asparagine 116 and asparagine 142. 202–210 (RDPRAVLRS) is a binding site for 3'-phosphoadenylyl sulfate. 2 N-linked (GlcNAc...) asparagine glycosylation sites follow: asparagine 229 and asparagine 305.

This sequence belongs to the sulfotransferase 1 family. Gal/GlcNAc/GalNAc subfamily. In terms of tissue distribution, expressed in cornea.

It is found in the golgi apparatus membrane. In terms of biological role, sulfotransferase that utilizes 3'-phospho-5'-adenylyl sulfate (PAPS) as sulfonate donor to catalyze the transfer of sulfate to position 6 of non-reducing N-acetylglucosamine (GlcNAc) residues of keratan. Mediates sulfation of keratan in cornea. Keratan sulfate plays a central role in maintaining corneal transparency. Acts on the non-reducing terminal GlcNAc of short and long carbohydrate substrates that have poly-N-acetyllactosamine structures. May also have activity toward O-linked sugars of mucin-type acceptors. This is Carbohydrate sulfotransferase 5 (Chst5) from Mus musculus (Mouse).